Here is a 276-residue protein sequence, read N- to C-terminus: Urease accessory protein UreD (276 aa).

It belongs to the UreD family. As to quaternary structure, ureD, UreF and UreG form a complex that acts as a GTP-hydrolysis-dependent molecular chaperone, activating the urease apoprotein by helping to assemble the nickel containing metallocenter of UreC. The UreE protein probably delivers the nickel.

It is found in the cytoplasm. Required for maturation of urease via the functional incorporation of the urease nickel metallocenter. In Bradyrhizobium diazoefficiens (strain JCM 10833 / BCRC 13528 / IAM 13628 / NBRC 14792 / USDA 110), this protein is Urease accessory protein UreD.